The primary structure comprises 388 residues: Translation initiation factor eIF2B subunit beta (388 aa).

Residues 109-133 (DDFETTTSNNNNNNNNNNINSSSNI) are disordered. A compositionally biased stretch (low complexity) spans 116-133 (SNNNNNNNNNNINSSSNI).

Belongs to the eIF-2B alpha/beta/delta subunits family. In terms of assembly, component of the translation initiation factor 2B (eIF2B) complex which is a heterodecamer of two sets of five different subunits: alpha, beta, gamma, delta and epsilon. Subunits alpha, beta and delta comprise a regulatory subcomplex and subunits epsilon and gamma comprise a catalytic subcomplex. Within the complex, the hexameric regulatory complex resides at the center, with the two heterodimeric catalytic subcomplexes bound on opposite sides.

It is found in the cytoplasm. It localises to the cytosol. In terms of biological role, acts as a component of the translation initiation factor 2B (eIF2B) complex, which catalyzes the exchange of GDP for GTP on eukaryotic initiation factor 2 (eIF2) gamma subunit. Its guanine nucleotide exchange factor activity is repressed when bound to eIF2 complex phosphorylated on the alpha subunit, thereby limiting the amount of methionyl-initiator methionine tRNA available to the ribosome and consequently global translation is repressed. The polypeptide is Translation initiation factor eIF2B subunit beta (eif2b2) (Dictyostelium discoideum (Social amoeba)).